A 235-amino-acid chain; its full sequence is MALQVDAPDVSSYDELYNRAVELLKHQQRVLIGLAGGPGSGKSTLCAILAKAWNERFGSEIVKIIPMDGFHYSLEELDRFDNPEKARALRGAEWTFDADLFYSLVRLMKKITDRELYAPSFDHAIGDPVVDDICVEPKNRILIFEGNYLLLNKPPWSDACKLYDIKAYLPVEHSVARARVAHRHLVSGLCATEEEAIERTDRNDMINLTFVEKNMVTPDIVLQQLRLKTVKTSSL.

36-43 (GGPGSGKS) contacts ATP.

This sequence belongs to the uridine kinase family.

Its subcellular location is the cytoplasm. The protein localises to the nucleus. It carries out the reaction uridine + ATP = UMP + ADP + H(+). It catalyses the reaction cytidine + ATP = CMP + ADP + H(+). Its pathway is pyrimidine metabolism; CTP biosynthesis via salvage pathway; CTP from cytidine: step 1/3. It participates in pyrimidine metabolism; UMP biosynthesis via salvage pathway; UMP from uridine: step 1/1. In Schizosaccharomyces pombe (strain 972 / ATCC 24843) (Fission yeast), this protein is Putative uridine kinase C227.14.